Consider the following 487-residue polypeptide: Glutamyl-tRNA(Gln) amidotransferase subunit A (487 aa).

Active-site charge relay system residues include Lys80 and Ser155. Residue Ser179 is the Acyl-ester intermediate of the active site.

It belongs to the amidase family. GatA subfamily. As to quaternary structure, heterotrimer of A, B and C subunits.

The catalysed reaction is L-glutamyl-tRNA(Gln) + L-glutamine + ATP + H2O = L-glutaminyl-tRNA(Gln) + L-glutamate + ADP + phosphate + H(+). In terms of biological role, allows the formation of correctly charged Gln-tRNA(Gln) through the transamidation of misacylated Glu-tRNA(Gln) in organisms which lack glutaminyl-tRNA synthetase. The reaction takes place in the presence of glutamine and ATP through an activated gamma-phospho-Glu-tRNA(Gln). The protein is Glutamyl-tRNA(Gln) amidotransferase subunit A of Chloroflexus aurantiacus (strain ATCC 29366 / DSM 635 / J-10-fl).